A 1149-amino-acid polypeptide reads, in one-letter code: Structural maintenance of chromosomes protein 6 homolog smc-6 (1149 aa).

77-84 (GPNGSGKS) provides a ligand contact to ATP. The stretch at 309-460 (LQDETKKEYA…EEEKYTIQRD (152 aa)) forms a coiled coil. The tract at residues 461–687 (INQLRRKIEQ…DVDEGALARL (227 aa)) is flexible hinge. The stretch at 714 to 920 (YNERDQTKAA…AVDRATVGCD (207 aa)) forms a coiled coil. Disordered stretches follow at residues 875–900 (NDKKNHPMPPGETDPPDLSSFPSTTE) and 1026–1060 (EVDEHSYDDDSDDSTGPRRKKSKKSGQKKKRVRDL). Residues 1026–1038 (EVDEHSYDDDSDD) show a composition bias toward acidic residues. Basic residues predominate over residues 1042-1058 (PRRKKSKKSGQKKKRVR).

It belongs to the SMC family. SMC6 subfamily. Interacts with smc-5. In terms of tissue distribution, expressed in the germline (at protein level).

It is found in the nucleus. The protein resides in the chromosome. Its function is as follows. Core component of the smc-5/smc-6 complex. Involved in DNA double-strand break repair by promoting sister-chromatid homologous recombination during meiosis. Also plays a role in the DNA damage repair of ultraviolet (UV) radiation-induced DNA lesions. Promotes efficient DNA replication. This is Structural maintenance of chromosomes protein 6 homolog smc-6 from Caenorhabditis elegans.